Here is a 560-residue protein sequence, read N- to C-terminus: DNA ligase B (560 aa).

K124 (N6-AMP-lysine intermediate) is an active-site residue.

The protein belongs to the NAD-dependent DNA ligase family. LigB subfamily.

The catalysed reaction is NAD(+) + (deoxyribonucleotide)n-3'-hydroxyl + 5'-phospho-(deoxyribonucleotide)m = (deoxyribonucleotide)n+m + AMP + beta-nicotinamide D-nucleotide.. In terms of biological role, catalyzes the formation of phosphodiester linkages between 5'-phosphoryl and 3'-hydroxyl groups in double-stranded DNA using NAD as a coenzyme and as the energy source for the reaction. The sequence is that of DNA ligase B from Escherichia coli O157:H7.